We begin with the raw amino-acid sequence, 563 residues long: BOS complex subunit NCLN (563 aa).

The N-terminal stretch at 1 to 42 (MLEEAGEVLENMLKASCLPLGFIVFLPAVLLLVAPPLPAADA) is a signal peptide. The Lumenal portion of the chain corresponds to 43–522 (AHEFTVYRMQ…VMNAYRVKPA (480 aa)). Residues Asn241 and Asn428 are each glycosylated (N-linked (GlcNAc...) asparagine). Residues 523–543 (IFDLLLAVCIGAYLGMAYTAV) form a helical membrane-spanning segment. Topologically, residues 544-563 (QHFDLLYKTVQRLLVKAKTQ) are cytoplasmic.

It belongs to the nicastrin family. Component of the back of Sec61 (BOS) complex, composed of NCLN/Nicalin, NOMO1 and TMEM147. The BOS complex is part of the multi-pass translocon (MPT) complex, composed of three subcomplexes, the GEL complex (composed of RAB5IF/OPTI and TMCO1), the BOS complex (composed of NCLN/Nicalin, NOMO1 and TMEM147) and the PAT complex (composed of WDR83OS/Asterix and CCDC47). The MPT complex associates with the SEC61 complex.

It is found in the endoplasmic reticulum membrane. Functionally, component of the multi-pass translocon (MPT) complex that mediates insertion of multi-pass membrane proteins into the lipid bilayer of membranes. The MPT complex takes over after the SEC61 complex: following membrane insertion of the first few transmembrane segments of proteins by the SEC61 complex, the MPT complex occludes the lateral gate of the SEC61 complex to promote insertion of subsequent transmembrane regions. May antagonize Nodal signaling and subsequent organization of axial structures during mesodermal patterning, via its interaction with NOMO. The sequence is that of BOS complex subunit NCLN from Canis lupus familiaris (Dog).